The sequence spans 364 residues: Coproporphyrin III ferrochelatase (364 aa).

Residues R29 and Y118 each contribute to the Fe-coproporphyrin III site. Positions 169 and 250 each coordinate Fe(2+).

It belongs to the ferrochelatase family.

The protein localises to the cytoplasm. It carries out the reaction Fe-coproporphyrin III + 2 H(+) = coproporphyrin III + Fe(2+). It functions in the pathway porphyrin-containing compound metabolism; protoheme biosynthesis. In terms of biological role, involved in coproporphyrin-dependent heme b biosynthesis. Catalyzes the insertion of ferrous iron into coproporphyrin III to form Fe-coproporphyrin III. The chain is Coproporphyrin III ferrochelatase from Streptococcus pneumoniae serotype 2 (strain D39 / NCTC 7466).